A 533-amino-acid polypeptide reads, in one-letter code: uncharacterized protein (533 aa).

4 stretches are compositionally biased toward polar residues: residues 30–43 (SQQG…VKNH), 79–91 (NAGT…THLS), 231–247 (NVKS…SSSA), and 254–263 (GRQSNSPNSN). 2 disordered regions span residues 30–92 (SQQG…HLSA) and 221–274 (SLSP…PGAS). Phosphoserine is present on S336. A disordered region spans residues 475–510 (HPSLSNSAASPPVSSPGLRRSHIPVHEGLKHTRDGV). Over residues 476–490 (PSLSNSAASPPVSSP) the composition is skewed to low complexity. Residues 498 to 510 (PVHEGLKHTRDGV) show a composition bias toward basic and acidic residues.

It localises to the nucleus. This is an uncharacterized protein from Schizosaccharomyces pombe (strain 972 / ATCC 24843) (Fission yeast).